The chain runs to 307 residues: Small ribosomal subunit biogenesis GTPase RsgA (307 aa).

Positions 80 to 237 (KADLRQTIVS…IVDTPGIKEF (158 aa)) constitute a CP-type G domain. GTP-binding positions include 129-132 (NKID) and 180-188 (GQSGVGKSS). Zn(2+) contacts are provided by Cys261, Cys266, His268, and Cys274.

It belongs to the TRAFAC class YlqF/YawG GTPase family. RsgA subfamily. In terms of assembly, monomer. Associates with 30S ribosomal subunit, binds 16S rRNA. Requires Zn(2+) as cofactor.

It is found in the cytoplasm. Functionally, one of several proteins that assist in the late maturation steps of the functional core of the 30S ribosomal subunit. Helps release RbfA from mature subunits. May play a role in the assembly of ribosomal proteins into the subunit. Circularly permuted GTPase that catalyzes slow GTP hydrolysis, GTPase activity is stimulated by the 30S ribosomal subunit. The chain is Small ribosomal subunit biogenesis GTPase RsgA from Borreliella afzelii (strain PKo) (Borrelia afzelii).